The following is a 600-amino-acid chain: DNA mismatch repair protein MutL (600 aa).

Positions 348–375 (QPQAQRPQTAWSAETSPFRPYQPTTGFS) are disordered. A compositionally biased stretch (polar residues) spans 349-362 (PQAQRPQTAWSAET).

Belongs to the DNA mismatch repair MutL/HexB family.

In terms of biological role, this protein is involved in the repair of mismatches in DNA. It is required for dam-dependent methyl-directed DNA mismatch repair. May act as a 'molecular matchmaker', a protein that promotes the formation of a stable complex between two or more DNA-binding proteins in an ATP-dependent manner without itself being part of a final effector complex. This chain is DNA mismatch repair protein MutL, found in Rhizobium leguminosarum bv. trifolii (strain WSM2304).